The primary structure comprises 324 residues: Probable UDP-sugar transporter protein SLC35A4 (324 aa).

Topologically, residues 1–18 are cytoplasmic; it reads MSVEDGGVPGLARPRQAR. A helical transmembrane segment spans residues 19–39; it reads WTLLLFLSTAMYGAHAPFLAL. The Lumenal portion of the chain corresponds to 40–52; that stretch reads CHVDGRVPFRPSS. A helical membrane pass occupies residues 53–73; that stretch reads AVLLTELTKLLLCAFSLLVGW. Residues 74–85 are Cytoplasmic-facing; sequence QTWPQGTPPWRQ. A helical membrane pass occupies residues 86–106; sequence AVPFALSALLYGANNNLVIYL. Residues 107–142 lie on the Lumenal side of the membrane; it reads QRYMDPSTYQVLSNLKIGSTALLYCLCLGHRLSARQ. The helical transmembrane segment at 143–163 threads the bilayer; the sequence is GLALLLLMAAGACYASGGFQE. Over 164 to 180 the chain is Cytoplasmic; it reads PVNTLPGPASAAGAHPM. A helical transmembrane segment spans residues 181-201; the sequence is PLHITPLGLLLLILYCLISGL. At 202-214 the chain is on the lumenal side; the sequence is SSVYTELIMKRQR. Residues 215-235 form a helical membrane-spanning segment; it reads LPLALQNLFLYTFGVILNFGL. Topologically, residues 236-248 are cytoplasmic; the sequence is YAGSGPGPGFLEG. A helical membrane pass occupies residues 249–271; it reads FSGWAVLVVLNQAVNGLLMSAVM. Residues 272–279 lie on the Lumenal side of the membrane; it reads KHGSSITR. The chain crosses the membrane as a helical span at residues 280-300; sequence LFIVSCSLVVNAVLSAVLLQL. Residues 301–324 are Cytoplasmic-facing; sequence QLTAIFFLAALLIGLAVCLYYGSP.

This sequence belongs to the nucleotide-sugar transporter family. SLC35A subfamily. As to quaternary structure, found in a complex with SLC35A2 and SLC35A3.

The protein resides in the golgi apparatus membrane. The catalysed reaction is CDP-L-ribitol(in) + CDP(out) = CDP-L-ribitol(out) + CDP(in). In terms of biological role, mediates the transport of CDP-ribitol. Does not exhibit CMP-sialic acid, UDP-galactose and UDP-N-acetylglucosamine transport activity. This is Probable UDP-sugar transporter protein SLC35A4 from Mus musculus (Mouse).